A 95-amino-acid chain; its full sequence is Small ribosomal subunit protein bS6 (95 aa).

Belongs to the bacterial ribosomal protein bS6 family.

Binds together with bS18 to 16S ribosomal RNA. This Rhodococcus jostii (strain RHA1) protein is Small ribosomal subunit protein bS6.